Here is a 73-residue protein sequence, read N- to C-terminus: Ubiquitin-like protein 5 (73 aa).

The Ubiquitin-like domain maps to 1-73; the sequence is MIEITCNDRL…DGMNLELYYQ (73 aa).

The protein localises to the cytoplasm. This Drosophila melanogaster (Fruit fly) protein is Ubiquitin-like protein 5 (ubl).